The sequence spans 260 residues: Pyridoxine 5'-phosphate synthase (260 aa).

Residues N7 and R18 each coordinate 3-amino-2-oxopropyl phosphate. H43 (proton acceptor) is an active-site residue. R45 and H50 together coordinate 1-deoxy-D-xylulose 5-phosphate. E83 serves as the catalytic Proton acceptor. T113 is a 1-deoxy-D-xylulose 5-phosphate binding site. Catalysis depends on H208, which acts as the Proton donor. Residues D209 and 230-231 (GH) contribute to the 3-amino-2-oxopropyl phosphate site.

The protein belongs to the PNP synthase family. Homooctamer; tetramer of dimers.

The protein resides in the cytoplasm. It carries out the reaction 3-amino-2-oxopropyl phosphate + 1-deoxy-D-xylulose 5-phosphate = pyridoxine 5'-phosphate + phosphate + 2 H2O + H(+). Its pathway is cofactor biosynthesis; pyridoxine 5'-phosphate biosynthesis; pyridoxine 5'-phosphate from D-erythrose 4-phosphate: step 5/5. Functionally, catalyzes the complicated ring closure reaction between the two acyclic compounds 1-deoxy-D-xylulose-5-phosphate (DXP) and 3-amino-2-oxopropyl phosphate (1-amino-acetone-3-phosphate or AAP) to form pyridoxine 5'-phosphate (PNP) and inorganic phosphate. The polypeptide is Pyridoxine 5'-phosphate synthase (Leptospira biflexa serovar Patoc (strain Patoc 1 / Ames)).